Reading from the N-terminus, the 201-residue chain is MAGKKKSKSDSLPLDLDNIKPLDHLQPVPKTRSSSITSIESVDEPGTMKQVLLPPTIREFDELDQFESFVRDETWDNDFDYFHGKLHYYPPFVMKSCQNNLEKIKPTMNKNSKKFRRDLHHHIQKHLIKDLEKCCGYELNFGKGEIVETDNKVTWKFKDETDHGFSKEEEDLYDRHWRLELDVSCTNESAMVDVEYKSIPM.

A disordered region spans residues 1 to 38; it reads MAGKKKSKSDSLPLDLDNIKPLDHLQPVPKTRSSSITS.

It belongs to the RGI1 family.

It localises to the cell membrane. Functionally, involved in the control of energetic metabolism and significantly contribute to cell fitness, especially under respiratory growth conditions. This Candida dubliniensis (strain CD36 / ATCC MYA-646 / CBS 7987 / NCPF 3949 / NRRL Y-17841) (Yeast) protein is Respiratory growth induced protein 1 (RGI1).